A 555-amino-acid polypeptide reads, in one-letter code: MSEAEARPSNFIRQIIDEDLASGKHTSVHTRFPPEPNGYLHIGHAKSICLNFGIAQDYQGQCNLRFDDTNPVKEDVEFVESIKRDVEWLGFTWSGDVRYSSDYFDQLYQYAVELINKGLAYVDELTPEQMREYRGTLTAPGKNSPYRDRSVEENLALFEKMRAGGFAEGTACLRAKIDMASPFMVMRDPVLYRIKFAEHHQSGNKWCIYPMYDFTHCISDAIEGITHSLCTLEFQDNRRLYDWVLDNISIECHPRQYEFSRLNLEYSIMSKRKLNLLVTEKVVEGWDDPRMPTISGLRRRGYTAASIREFCRRIGVTKQDNNVEMMALESCIRDDLNENAPRAMAVLDPIKVVIENRAAGEEWLTMPNHPNNPDMGTRQVPFDSEIYIDRADFREEANKQYKRLVLGKEVRLRNAYVIKAERVEKDAEGHVTTLYCSYDAETLNKDPADGRKVKGVIHWVSVKHALPAEIRLYDRLFSVPNPAAAEDFLSTINPESLIIRQGFVEPSLADAVPEKTYQFEREGYFCADSHYSRPDALVFNRTVGLRDTWAAKVTN.

Positions P34–H44 match the 'HIGH' region motif. ATP-binding positions include E35–N37 and H41–S47. The L-glutamine site is built by D67 and Y212. Residues T231, R261–L262, and M269–K271 contribute to the ATP site. The short motif at I268–R272 is the 'KMSKS' region element.

It belongs to the class-I aminoacyl-tRNA synthetase family. Monomer.

The protein localises to the cytoplasm. The catalysed reaction is tRNA(Gln) + L-glutamine + ATP = L-glutaminyl-tRNA(Gln) + AMP + diphosphate. The polypeptide is Glutamine--tRNA ligase (Yersinia enterocolitica serotype O:8 / biotype 1B (strain NCTC 13174 / 8081)).